Here is a 186-residue protein sequence, read N- to C-terminus: Acetyltransferase PA2578 (186 aa).

In terms of domain architecture, N-acetyltransferase spans Leu12–Gln176. CoA contacts are provided by residues Gln37, Ile97–Leu99, Gly105, Asn137, and His142–Tyr144.

As to quaternary structure, homodimer.

Catalyzes the transfer of an acetyl group from acetyl coenzyme A (AcCoA) to an acceptor substrate and releases both CoA and the acetylated product. It prefers the antibiotic chloramphenicol. In Pseudomonas aeruginosa (strain ATCC 15692 / DSM 22644 / CIP 104116 / JCM 14847 / LMG 12228 / 1C / PRS 101 / PAO1), this protein is Acetyltransferase PA2578.